The chain runs to 485 residues: Glutamyl-tRNA(Gln) amidotransferase subunit A (485 aa).

Catalysis depends on charge relay system residues Lys-79 and Ser-154. Ser-178 functions as the Acyl-ester intermediate in the catalytic mechanism.

It belongs to the amidase family. GatA subfamily. In terms of assembly, heterotrimer of A, B and C subunits.

It catalyses the reaction L-glutamyl-tRNA(Gln) + L-glutamine + ATP + H2O = L-glutaminyl-tRNA(Gln) + L-glutamate + ADP + phosphate + H(+). In terms of biological role, allows the formation of correctly charged Gln-tRNA(Gln) through the transamidation of misacylated Glu-tRNA(Gln) in organisms which lack glutaminyl-tRNA synthetase. The reaction takes place in the presence of glutamine and ATP through an activated gamma-phospho-Glu-tRNA(Gln). This is Glutamyl-tRNA(Gln) amidotransferase subunit A from Sulfurihydrogenibium sp. (strain YO3AOP1).